Consider the following 313-residue polypeptide: Protein FixB (313 aa).

255-283 contacts FAD; the sequence is LYLAVGISGQIQHMVGANASQTIFAINKD.

The protein belongs to the ETF alpha-subunit/FixB family. As to quaternary structure, heterodimer of FixA and FixB.

Its pathway is amine and polyamine metabolism; carnitine metabolism. Its function is as follows. Required for anaerobic carnitine reduction. May bring reductant to CaiA. The sequence is that of Protein FixB from Escherichia coli (strain SMS-3-5 / SECEC).